Consider the following 879-residue polypeptide: Beta-mannosidase (879 aa).

An N-terminal signal peptide occupies residues Met1–Ala17. Residues Asn35 and Asn77 are each glycosylated (N-linked (GlcNAc...) asparagine). Residues Cys167 and Cys176 are joined by a disulfide bond. Trp190–Trp192 provides a ligand contact to substrate. Asn297 carries an N-linked (GlcNAc...) asparagine glycan. Asn456 contacts substrate. Glu457 acts as the Proton donor in catalysis. 3 disulfides stabilise this stretch: Cys540–Cys629, Cys732–Cys761, and Cys764–Cys769. Glu554 serves as the catalytic Nucleophile. The N-linked (GlcNAc...) asparagine glycan is linked to Asn803.

This sequence belongs to the glycosyl hydrolase 2 family. In terms of assembly, monomer. N-glycosylated. Detected in kidney (at protein level). Found in spleen and to a lesser extent in liver. Not detected in kidney or brain.

The protein localises to the lysosome. It carries out the reaction Hydrolysis of terminal, non-reducing beta-D-mannose residues in beta-D-mannosides.. It participates in glycan metabolism; N-glycan degradation. In terms of biological role, exoglycosidase that cleaves the single beta-linked mannose residue from the non-reducing end of all N-linked glycoprotein oligosaccharides. This Capra hircus (Goat) protein is Beta-mannosidase (MANBA).